Here is a 507-residue protein sequence, read N- to C-terminus: Myocyte-specific enhancer factor 2D (507 aa).

The 55-residue stretch at arginine 3–tyrosine 57 folds into the MADS-box domain. The mef2-type DNA-binding region spans alanine 58–glutamate 86. Residues serine 98, serine 106, serine 110, serine 121, and serine 180 each carry the phosphoserine modification. Residues threonine 174–glycine 207 form a disordered region. The segment covering serine 180–serine 192 has biased composition (polar residues). A Phosphoserine; by PKA modification is found at serine 190. Serine 231 carries the phosphoserine modification. 3 disordered regions span residues asparagine 244–lysine 267, tryptophan 357–histidine 392, and serine 423–lysine 507. Lysine 245 is modified (N6-acetyllysine). Phosphoserine is present on serine 251. The segment covering proline 363–glutamine 389 has biased composition (pro residues). Lysine 425 is subject to N6-acetyllysine; alternate. Lysine 425 participates in a covalent cross-link: Glycyl lysine isopeptide (Lys-Gly) (interchain with G-Cter in SUMO); alternate. Serine 430 carries the phosphoserine modification.

Forms a complex with class II HDACs in undifferentiating cells. On myogenic differentiation, HDACs are released into the cytoplasm allowing MEF2s to interact with other proteins for activation. Interacts with HDAC4 (in undifferentiating cells); the interaction translocates MEF2D to nuclear dots. Forms a heterodimer with MEF2A. Interacts with MAPK7; the interaction phosphorylates but does not activate MEF2D. Interacts with MYOG. Interacts with CCAR2 and HDAC3. In terms of processing, phosphorylated on Ser-430 by CDK5 is required for Lys-425 sumoylation and inhibits transcriptional activity. In neurons, enhanced CDK5 activity induced by neurotoxins promotes caspase 3-mediated cleavage leading to neuron apoptosis. Phosphorylation on Ser-180 can be enhanced by EGF. Phosphorylated and activated by CaMK4. Acetylated on Lys-425 by CREBBP. Acetylated by EP300. Deacetylated by SIRT1 and HDAC3. Post-translationally, sumoylated on Lys-425 with SUMO2 but not SUMO1; which inhibits transcriptional activity and myogenic activity. Desumoylated by SENP3.

It is found in the nucleus. Its function is as follows. Transcriptional activator which binds specifically to the MEF2 element, 5'-YTA[AT](4)TAR-3', found in numerous muscle-specific, growth factor- and stress-induced genes. Mediates cellular functions not only in skeletal and cardiac muscle development, but also in neuronal differentiation and survival. Plays diverse roles in the control of cell growth, survival and apoptosis via p38 MAPK signaling in muscle-specific and/or growth factor-related transcription. Plays a critical role in the regulation of neuronal apoptosis. The protein is Myocyte-specific enhancer factor 2D (Mef2d) of Rattus norvegicus (Rat).